The sequence spans 174 residues: Transgelin (174 aa).

One can recognise a Calponin-homology (CH) domain in the interval 3–109 (SQLEKEAREW…SIHSFSRYAA (107 aa)).

In terms of assembly, binds to actin.

The protein resides in the cytoplasm. Its function is as follows. Has actin-binding and actin-bundling activity and is a component of the actin patch. Stabilizes actin filaments against disassembly. Cross-links F-actin and is required for the formation of the contractile F-actin ring. This is Transgelin (stg1) from Schizosaccharomyces pombe (strain 972 / ATCC 24843) (Fission yeast).